Consider the following 616-residue polypeptide: Protein cereblon (616 aa).

Disordered stretches follow at residues 1–39 (MDEEETAEINAQEQEVAGSAGEAAAGPSGAEVQPNDDSV), 63–137 (FGPS…AMPR), and 182–220 (SQERRRSRNSDEVSPEAEDDELPEHPPPPPPRPPIDIDM). Residues 11 to 32 (AQEQEVAGSAGEAAAGPSGAEV) are compositionally biased toward low complexity. Positions 96–107 (SEEDIVLDDGTE) are enriched in acidic residues. Over residues 183 to 192 (QERRRSRNSD) the composition is skewed to basic and acidic residues. Residues 194 to 203 (VSPEAEDDEL) show a composition bias toward acidic residues. Over residues 206–215 (HPPPPPPRPP) the composition is skewed to pro residues. Residues 257-482 (HMLIFLHQYI…LIGGILKEET (226 aa)) form the Lon N-terminal domain. Residues 481 to 590 (ETLFYCRYCN…LAGSSVRIGK (110 aa)) enclose the CULT domain. Zn(2+)-binding residues include Cys486, Cys489, Cys555, and Cys558.

The protein belongs to the CRBN family. Likely a component of a DCX (DDB1-CUL4-X-box) protein ligase complex. May interact with pic/DDB1. Post-translationally, ubiquitinated.

It is found in the nucleus. Its pathway is protein modification; protein ubiquitination. In terms of biological role, substrate recognition component of a DCX (DDB1-CUL4-X-box) E3 protein ligase complex that mediates the ubiquitination and subsequent proteasomal degradation of target proteins. Has an essential role in mediating growth by negatively regulating insulin signaling. It also has a role in maintaining presynaptic function in the neuromuscular junction synapses of third-instar larvae. The chain is Protein cereblon from Drosophila pseudoobscura pseudoobscura (Fruit fly).